A 267-amino-acid polypeptide reads, in one-letter code: MEMO1 family protein MA_0601 (267 aa).

It belongs to the MEMO1 family.

The chain is MEMO1 family protein MA_0601 from Methanosarcina acetivorans (strain ATCC 35395 / DSM 2834 / JCM 12185 / C2A).